We begin with the raw amino-acid sequence, 126 residues long: Small ribosomal subunit protein uS13 (126 aa).

The interval 94 to 126 (GLPVRGQKTRNNAHTVKGKPKAAIAGKKKNKVN) is disordered. Positions 109-126 (VKGKPKAAIAGKKKNKVN) are enriched in basic residues.

Belongs to the universal ribosomal protein uS13 family. In terms of assembly, part of the 30S ribosomal subunit. Forms a loose heterodimer with protein S19. Forms two bridges to the 50S subunit in the 70S ribosome.

In terms of biological role, located at the top of the head of the 30S subunit, it contacts several helices of the 16S rRNA. In the 70S ribosome it contacts the 23S rRNA (bridge B1a) and protein L5 of the 50S subunit (bridge B1b), connecting the 2 subunits; these bridges are implicated in subunit movement. Contacts the tRNAs in the A and P-sites. This is Small ribosomal subunit protein uS13 from Aster yellows witches'-broom phytoplasma (strain AYWB).